A 254-amino-acid chain; its full sequence is Gamma-glutamyl-gamma-aminobutyrate hydrolase (254 aa).

Residues 16-250 (RNRLKGHATQ…ITAWQHHIAE (235 aa)) form the Glutamine amidotransferase type-1 domain. The Nucleophile role is filled by Cys114. Residues His222 and Glu224 contribute to the active site.

This sequence belongs to the peptidase C26 family.

It catalyses the reaction 4-(gamma-L-glutamylamino)butanoate + H2O = 4-aminobutanoate + L-glutamate. The protein operates within amine and polyamine degradation; putrescine degradation; 4-aminobutanoate from putrescine: step 4/4. Its function is as follows. Involved in the breakdown of putrescine via hydrolysis of the gamma-glutamyl linkage of gamma-glutamyl-gamma-aminobutyrate. The chain is Gamma-glutamyl-gamma-aminobutyrate hydrolase (puuD) from Shigella flexneri.